The chain runs to 615 residues: 1-deoxy-D-xylulose-5-phosphate synthase (615 aa).

Thiamine diphosphate is bound by residues H72 and 111 to 113 (GHS). Position 142 (D142) interacts with Mg(2+). Residues 143-144 (GA), N171, Y278, and E360 contribute to the thiamine diphosphate site. N171 lines the Mg(2+) pocket.

The protein belongs to the transketolase family. DXPS subfamily. As to quaternary structure, homodimer. The cofactor is Mg(2+). It depends on thiamine diphosphate as a cofactor.

The enzyme catalyses D-glyceraldehyde 3-phosphate + pyruvate + H(+) = 1-deoxy-D-xylulose 5-phosphate + CO2. It participates in metabolic intermediate biosynthesis; 1-deoxy-D-xylulose 5-phosphate biosynthesis; 1-deoxy-D-xylulose 5-phosphate from D-glyceraldehyde 3-phosphate and pyruvate: step 1/1. Its function is as follows. Catalyzes the acyloin condensation reaction between C atoms 2 and 3 of pyruvate and glyceraldehyde 3-phosphate to yield 1-deoxy-D-xylulose-5-phosphate (DXP). The protein is 1-deoxy-D-xylulose-5-phosphate synthase of Campylobacter jejuni (strain RM1221).